The sequence spans 287 residues: Phosphatidylserine decarboxylase proenzyme (287 aa).

Catalysis depends on charge relay system; for autoendoproteolytic cleavage activity residues aspartate 89, histidine 146, and serine 252. Serine 252 acts as the Schiff-base intermediate with substrate; via pyruvic acid; for decarboxylase activity in catalysis. Serine 252 carries the pyruvic acid (Ser); by autocatalysis modification.

It belongs to the phosphatidylserine decarboxylase family. PSD-B subfamily. Prokaryotic type I sub-subfamily. As to quaternary structure, heterodimer of a large membrane-associated beta subunit and a small pyruvoyl-containing alpha subunit. Requires pyruvate as cofactor. In terms of processing, is synthesized initially as an inactive proenzyme. Formation of the active enzyme involves a self-maturation process in which the active site pyruvoyl group is generated from an internal serine residue via an autocatalytic post-translational modification. Two non-identical subunits are generated from the proenzyme in this reaction, and the pyruvate is formed at the N-terminus of the alpha chain, which is derived from the carboxyl end of the proenzyme. The autoendoproteolytic cleavage occurs by a canonical serine protease mechanism, in which the side chain hydroxyl group of the serine supplies its oxygen atom to form the C-terminus of the beta chain, while the remainder of the serine residue undergoes an oxidative deamination to produce ammonia and the pyruvoyl prosthetic group on the alpha chain. During this reaction, the Ser that is part of the protease active site of the proenzyme becomes the pyruvoyl prosthetic group, which constitutes an essential element of the active site of the mature decarboxylase.

The protein resides in the cell membrane. The catalysed reaction is a 1,2-diacyl-sn-glycero-3-phospho-L-serine + H(+) = a 1,2-diacyl-sn-glycero-3-phosphoethanolamine + CO2. Its pathway is phospholipid metabolism; phosphatidylethanolamine biosynthesis; phosphatidylethanolamine from CDP-diacylglycerol: step 2/2. Catalyzes the formation of phosphatidylethanolamine (PtdEtn) from phosphatidylserine (PtdSer). This is Phosphatidylserine decarboxylase proenzyme from Shewanella amazonensis (strain ATCC BAA-1098 / SB2B).